We begin with the raw amino-acid sequence, 293 residues long: MRFTATVLSRVATGLALGLSMATASLAETPVEALSETVARIEEQLGARVGLSLMETGTGWSWSHREDELFLMNSTVKVPVCGAILARWDAGRLSLSDALPVRKADLVPYAPVTETRVGGNMTLDELCLAAIDMSDNVAANILIGHLGGPEAVTQFFRSVGDPTSRLDRIEPKLNDFASGDERDTTSPAAMSETLRALLLGDVLSPEARGKLAEWMRHGGVTGALLRAEAEDAWLILDKSGSGSHTRNLVAVIQPEGGAPWIATMFISDTDAEFEVRNEALKDLGRAVVAVVRE.

The N-terminal stretch at 1–27 (MRFTATVLSRVATGLALGLSMATASLA) is a signal peptide. Residue serine 74 is the Acyl-ester intermediate of the active site. 238-240 (KSG) contacts substrate.

Belongs to the class-A beta-lactamase family.

The protein localises to the periplasm. It carries out the reaction a beta-lactam + H2O = a substituted beta-amino acid. Its function is as follows. Hydrolyzes beta-lactams antibiotics. Rates of hydrolysis relative to benzylpenicillin =100: ampicillin = 27, carbenicillin = 25, cloxacillin = 0, cephaloridine = 4. In Rhodobacter capsulatus (Rhodopseudomonas capsulata), this protein is Beta-lactamase.